The following is a 297-amino-acid chain: Homoserine kinase (297 aa).

82–92 provides a ligand contact to ATP; sequence PLTRGLGSSAS.

It belongs to the GHMP kinase family. Homoserine kinase subfamily.

The protein resides in the cytoplasm. The enzyme catalyses L-homoserine + ATP = O-phospho-L-homoserine + ADP + H(+). Its pathway is amino-acid biosynthesis; L-threonine biosynthesis; L-threonine from L-aspartate: step 4/5. Functionally, catalyzes the ATP-dependent phosphorylation of L-homoserine to L-homoserine phosphate. The protein is Homoserine kinase of Bacillus thuringiensis subsp. konkukian (strain 97-27).